The primary structure comprises 313 residues: MNTFSQVWVFSDTPSRLPELMNGAQALANQINTFVLNDADGAQAIQLGANHVWKLNGKPNDRMIEDYAGVIADTIRQHGADGLVLLPNTRRGKLLAAKLGYRLNAAVSNDASTVSVQDGKATVKHMVYGGLAIGEERIATPYAVLTISSGTFDVAQPDASRTGETHTVEWQAPAVAITRTATQARQSNSVDLDKARLVVSVGRGIGSKENIALAEQLCKAIGAELACSRPVAENEKWMEHERYVGISNLMLKPELYLAVGISGQIQHMVGANASQTIFAINKDKNAPIFQYADYGIVGDAVKILPALTAALAR.

255-283 (LYLAVGISGQIQHMVGANASQTIFAINKD) contributes to the FAD binding site.

Belongs to the ETF alpha-subunit/FixB family. Heterodimer of FixA and FixB.

Its pathway is amine and polyamine metabolism; carnitine metabolism. Its function is as follows. Required for anaerobic carnitine reduction. May bring reductant to CaiA. The sequence is that of Protein FixB from Escherichia coli O6:K15:H31 (strain 536 / UPEC).